Consider the following 209-residue polypeptide: Ribosomal RNA small subunit methyltransferase G (209 aa).

Residues G72, L77, 123 to 124 (AE), and R138 contribute to the S-adenosyl-L-methionine site.

Belongs to the methyltransferase superfamily. RNA methyltransferase RsmG family.

The protein localises to the cytoplasm. Its function is as follows. Specifically methylates the N7 position of guanine in position 518 of 16S rRNA. This chain is Ribosomal RNA small subunit methyltransferase G, found in Leifsonia xyli subsp. xyli (strain CTCB07).